Consider the following 447-residue polypeptide: Phosphoglucosamine mutase (447 aa).

The Phosphoserine intermediate role is filled by serine 102. The Mg(2+) site is built by serine 102, aspartate 241, aspartate 243, and aspartate 245. At serine 102 the chain carries Phosphoserine.

The protein belongs to the phosphohexose mutase family. The cofactor is Mg(2+). Activated by phosphorylation.

It catalyses the reaction alpha-D-glucosamine 1-phosphate = D-glucosamine 6-phosphate. In terms of biological role, catalyzes the conversion of glucosamine-6-phosphate to glucosamine-1-phosphate. This is Phosphoglucosamine mutase from Pseudoalteromonas atlantica (strain T6c / ATCC BAA-1087).